The sequence spans 900 residues: Alanine--tRNA ligase (900 aa).

Zn(2+)-binding residues include His604, His608, Cys708, and His712.

This sequence belongs to the class-II aminoacyl-tRNA synthetase family. The cofactor is Zn(2+).

It is found in the cytoplasm. The enzyme catalyses tRNA(Ala) + L-alanine + ATP = L-alanyl-tRNA(Ala) + AMP + diphosphate. In terms of biological role, catalyzes the attachment of alanine to tRNA(Ala) in a two-step reaction: alanine is first activated by ATP to form Ala-AMP and then transferred to the acceptor end of tRNA(Ala). Also edits incorrectly charged Ser-tRNA(Ala) and Gly-tRNA(Ala) via its editing domain. The chain is Alanine--tRNA ligase from Saccharolobus islandicus (strain M.14.25 / Kamchatka #1) (Sulfolobus islandicus).